A 737-amino-acid chain; its full sequence is Transcriptional repressor CTCF (737 aa).

Position 1 is an N-acetylmethionine (M1). K18 participates in a covalent cross-link: Glycyl lysine isopeptide (Lys-Gly) (interchain with G-Cter in SUMO2). K74 is covalently cross-linked (Glycyl lysine isopeptide (Lys-Gly) (interchain with G-Cter in SUMO)). The tract at residues Q180–K211 is disordered. Residues K202–K211 are compositionally biased toward basic residues. K219 participates in a covalent cross-link: Glycyl lysine isopeptide (Lys-Gly) (interchain with G-Cter in SUMO2). A C2H2-type 1 zinc finger spans residues F266–H288. T289 is subject to Phosphothreonine. Residues H294–H316 form a C2H2-type 2 zinc finger. Phosphothreonine is present on T317. C2H2-type zinc fingers lie at residues H322–H345 and F351–H373. T374 carries the post-translational modification Phosphothreonine. The C2H2-type 5 zinc-finger motif lies at F379–H401. S402 carries the post-translational modification Phosphoserine. 5 C2H2-type zinc fingers span residues Y407–H430, F437–H460, K467–H489, F495–H517, and Y523–H546. A C2H2-type 11; atypical zinc finger spans residues F555 to C577. Disordered regions lie at residues H573–N687 and K699–T727. Basic residues predominate over residues K593–S604. S609, S610, and S612 each carry phosphoserine. The segment covering S610–P636 has biased composition (acidic residues). A compositionally biased stretch (pro residues) spans E637–P657. The segment covering R668 to N687 has biased composition (polar residues). K699 is covalently cross-linked (Glycyl lysine isopeptide (Lys-Gly) (interchain with G-Cter in SUMO); alternate). K699 is covalently cross-linked (Glycyl lysine isopeptide (Lys-Gly) (interchain with G-Cter in SUMO2); alternate). Acidic residues predominate over residues A704 to A714.

The protein belongs to the CTCF zinc-finger protein family. In terms of assembly, interacts with CHD8. Interacts with LLPH. Interacts with CENPE. Interacts with BRD2; promoting BRD2 recruitment to chromatin. In terms of processing, sumoylated on Lys-74 and Lys-699; sumoylation of CTCF contributes to the repressive function of CTCF on the MYC P2 promoter.

The protein resides in the nucleus. The protein localises to the nucleoplasm. It is found in the chromosome. It localises to the centromere. Functionally, chromatin binding factor that binds to DNA sequence specific sites and regulates the 3D structure of chromatin. Binds together strands of DNA, thus forming chromatin loops, and anchors DNA to cellular structures, such as the nuclear lamina. Defines the boundaries between active and heterochromatic DNA via binding to chromatin insulators, thereby preventing interaction between promoter and nearby enhancers and silencers. Plays a critical role in the epigenetic regulation. Participates in the allele-specific gene expression at the imprinted IGF2/H19 gene locus. On the maternal allele, binding within the H19 imprinting control region (ICR) mediates maternally inherited higher-order chromatin conformation to restrict enhancer access to IGF2. Mediates interchromosomal association between IGF2/H19 and WSB1/NF1 and may direct distant DNA segments to a common transcription factory. Regulates asynchronous replication of IGF2/H19. Plays a critical role in gene silencing over considerable distances in the genome. Preferentially interacts with unmethylated DNA, preventing spreading of CpG methylation and maintaining methylation-free zones. Inversely, binding to target sites is prevented by CpG methylation. Plays an important role in chromatin remodeling. Can dimerize when it is bound to different DNA sequences, mediating long-range chromatin looping. Causes local loss of histone acetylation and gain of histone methylation in the beta-globin locus, without affecting transcription. When bound to chromatin, it provides an anchor point for nucleosomes positioning. Seems to be essential for homologous X-chromosome pairing. May participate with Tsix in establishing a regulatable epigenetic switch for X chromosome inactivation. May play a role in preventing the propagation of stable methylation at the escape genes from X-inactivation. Involved in sister chromatid cohesion. Associates with both centromeres and chromosomal arms during metaphase and required for cohesin localization to CTCF sites. Plays a role in the recruitment of CENPE to the pericentromeric/centromeric regions of the chromosome during mitosis. Acts as a transcriptional repressor binding to promoters of vertebrate MYC gene and BAG1 gene. Also binds to the PLK and PIM1 promoters. Acts as a transcriptional activator of APP. Regulates APOA1/C3/A4/A5 gene cluster and controls MHC class II gene expression. Plays an essential role in oocyte and preimplantation embryo development by activating or repressing transcription. Seems to act as tumor suppressor. The sequence is that of Transcriptional repressor CTCF (Ctcf) from Rattus norvegicus (Rat).